Consider the following 370-residue polypeptide: Glutathione S-transferase omega-like 2 (370 aa).

Glutathione is bound at residue Arg-15. The Nucleophile role is filled by Cys-46. Trp-79, Arg-155, Val-158, Glu-173, and Ser-174 together coordinate glutathione. Residues 201–353 (PAQLKTQIDD…LHYTRSHTRI (153 aa)) form the GST C-terminal domain.

This sequence belongs to the GST superfamily. Omega family. As to quaternary structure, homodimer.

The protein resides in the cytoplasm. It carries out the reaction RX + glutathione = an S-substituted glutathione + a halide anion + H(+). The catalysed reaction is L-dehydroascorbate + 2 glutathione = glutathione disulfide + L-ascorbate. Functionally, active as '1-Cys' thiol transferase against beta-hydroxyethyl disulfide (HED), as dehydroascorbate reductase and as dimethylarsinic acid reductase, while not active against the standard GST substrate 1-chloro-2,4-dinitrobenzene (CDNB). May be involved in cell wall organization and biogenesis. This is Glutathione S-transferase omega-like 2 from Saccharomyces cerevisiae (strain ATCC 204508 / S288c) (Baker's yeast).